The following is a 267-amino-acid chain: MALWPPLNSGMLVRTGHTVLTWGITLVLFLHDTELRQWEEQGELLLPLTFLLLVLSSLLLYLAVSLMDPGYVTTQPQPQGEPKEEQAAMVPQAVPLRRCRHCLVLQPLRARHCRDCRRCVRRYDHHCPWMENCVGERNHPLFVAYLALQLVVLLWGLCLAWSGLQFFQPWGLWLRSTGLLFTTFLLLSFFALVVALLLASHLYLVARNTTTWEFISSHRIAYLRQRTSNPFDRGPTRNLAHFFCGWPSGPWETLSAEEEEEGSSQVV.

The Cytoplasmic portion of the chain corresponds to 1-9 (MALWPPLNS). The chain crosses the membrane as a helical span at residues 10–30 (GMLVRTGHTVLTWGITLVLFL). Residues 31–43 (HDTELRQWEEQGE) are Lumenal-facing. A helical membrane pass occupies residues 44-64 (LLLPLTFLLLVLSSLLLYLAV). Residues 65–140 (SLMDPGYVTT…ENCVGERNHP (76 aa)) are Cytoplasmic-facing. Residues 97 to 147 (RRCRHCLVLQPLRARHCRDCRRCVRRYDHHCPWMENCVGERNHPLFVAYLA) form the DHHC domain. Cysteine 127 serves as the catalytic S-palmitoyl cysteine intermediate. The chain crosses the membrane as a helical span at residues 141-161 (LFVAYLALQLVVLLWGLCLAW). Residues 162–178 (SGLQFFQPWGLWLRSTG) are Lumenal-facing. Residues 179–199 (LLFTTFLLLSFFALVVALLLA) traverse the membrane as a helical segment. At 200–267 (SHLYLVARNT…EEEEGSSQVV (68 aa)) the chain is on the cytoplasmic side.

Belongs to the DHHC palmitoyltransferase family.

It localises to the golgi apparatus membrane. It is found in the endoplasmic reticulum membrane. It catalyses the reaction L-cysteinyl-[protein] + hexadecanoyl-CoA = S-hexadecanoyl-L-cysteinyl-[protein] + CoA. Functionally, palmitoyltransferase that catalyzes the addition of palmitate onto various protein substrates. Has a palmitoyltransferase activity toward gephyrin/GPHN, regulating its clustering at synapses and its function in gamma-aminobutyric acid receptor clustering. Thereby, indirectly regulates GABAergic synaptic transmission. Negatively regulates NLRP3-driven inflammation. Catalyzes NLRP3 palmitoylation, leading to its degradation via the chaperone-mediated autophagy (CMA) process. This chain is Palmitoyltransferase ZDHHC12, found in Mus musculus (Mouse).